Reading from the N-terminus, the 239-residue chain is Ribonuclease 3 (239 aa).

One can recognise an RNase III domain in the interval R12 to G137. Position 50 (E50) interacts with Mg(2+). Residue D54 is part of the active site. D123 and E126 together coordinate Mg(2+). E126 is a catalytic residue. Residues D162–V231 enclose the DRBM domain.

This sequence belongs to the ribonuclease III family. Homodimer. Requires Mg(2+) as cofactor.

The protein localises to the cytoplasm. It carries out the reaction Endonucleolytic cleavage to 5'-phosphomonoester.. In terms of biological role, digests double-stranded RNA. Involved in the processing of primary rRNA transcript to yield the immediate precursors to the large and small rRNAs (23S and 16S). Processes some mRNAs, and tRNAs when they are encoded in the rRNA operon. Processes pre-crRNA and tracrRNA of type II CRISPR loci if present in the organism. The polypeptide is Ribonuclease 3 (Allorhizobium ampelinum (strain ATCC BAA-846 / DSM 112012 / S4) (Agrobacterium vitis (strain S4))).